We begin with the raw amino-acid sequence, 89 residues long: Large ribosomal subunit protein bL27 (89 aa).

Positions 1-22 are disordered; the sequence is MAHKKGTGSTRNGRDSNAQRLG. Residues 7 to 19 are compositionally biased toward polar residues; sequence TGSTRNGRDSNAQ.

This sequence belongs to the bacterial ribosomal protein bL27 family.

The chain is Large ribosomal subunit protein bL27 from Cyanothece sp. (strain PCC 7425 / ATCC 29141).